A 381-amino-acid chain; its full sequence is MRSSLCWLLTLLLILATAAQGQPTRRPRPRPRPRPRPRLRPTPSFPQPDEPTEPTDLPPPLPPGPPSVFPDCPRECYCPPDFPSALYCDSRNLRKVPVIPSRIHYLYLQNNFITELPVESFKNATGLRWINLDNNRIRKVDQRVLEKLPSLVFLYLEKNQLEEVPAALPRNLEQLRLSQNQISRIPPGVFSKLENLLLLDLQHNKLSDGVFKPDTFQGLKNLMQLNLAHNTLRKMPPKVPSAIHQLYLDSNRIEAIPSGYFKGFPNLAFIRLNYNQLSDRGLPKNSFNISNLLVLHLSHNRISSVPAISSRLEHLYLNNNSIEKINGTQICPNNIVAFHDFSSDLEHVPHLRYLRLDGNYLKPPIPLDLMMCFRLLQSVVI.

The first 21 residues, 1–21 (MRSSLCWLLTLLLILATAAQG), serve as a signal peptide directing secretion. Positions 19–65 (AQGQPTRRPRPRPRPRPRPRLRPTPSFPQPDEPTEPTDLPPPLPPGP) are disordered. Residues 25 to 39 (RRPRPRPRPRPRPRL) are compositionally biased toward basic residues. Residues 56–65 (DLPPPLPPGP) show a composition bias toward pro residues. LRR repeat units follow at residues 94–113 (RKVPVIPSRIHYLYLQNNFI), 114–137 (TELPVESFKNATGLRWINLDNNRI), 138–161 (RKVDQRVLEKLPSLVFLYLEKNQL), 162–182 (EEVPAALPRNLEQLRLSQNQI), 183–206 (SRIPPGVFSKLENLLLLDLQHNKL), 207–232 (SDGVFKPDTFQGLKNLMQLNLAHNTL), 233–253 (RKMPPKVPSAIHQLYLDSNRI), 254–277 (EAIPSGYFKGFPNLAFIRLNYNQL), 278–302 (SDRGLPKNSFNISNLLVLHLSHNRI), 303–322 (SSVPAISSRLEHLYLNNNSI), 323–361 (EKINGTQICPNNIVAFHDFSSDLEHVPHLRYLRLDGNYL), and 362–381 (KPPIPLDLMMCFRLLQSVVI). Asn-123 carries N-linked (GlcNAc...) asparagine glycosylation. Residues Asn-288, Asn-319, and Asn-326 are each glycosylated (N-linked (GlcNAc...) asparagine). The cysteines at positions 331 and 372 are disulfide-linked.

Belongs to the small leucine-rich proteoglycan (SLRP) family. SLRP class II subfamily. As to quaternary structure, binds the basement membrane heparan sulfate proteoglycan perlecan and triple helical collagens type I and type II. Post-translationally, glycosylated; contains heparan sulfate.

It localises to the secreted. Its subcellular location is the extracellular space. The protein resides in the extracellular matrix. Its function is as follows. May anchor basement membranes to the underlying connective tissue. The protein is Prolargin (PRELP) of Bos taurus (Bovine).